The chain runs to 349 residues: UPF0284 protein MA_3887 (349 aa).

It belongs to the UPF0284 family.

In Methanosarcina acetivorans (strain ATCC 35395 / DSM 2834 / JCM 12185 / C2A), this protein is UPF0284 protein MA_3887.